The sequence spans 147 residues: Putative pre-16S rRNA nuclease (147 aa).

The protein belongs to the YqgF nuclease family.

It localises to the cytoplasm. Its function is as follows. Could be a nuclease involved in processing of the 5'-end of pre-16S rRNA. The chain is Putative pre-16S rRNA nuclease from Polynucleobacter necessarius subsp. necessarius (strain STIR1).